A 266-amino-acid polypeptide reads, in one-letter code: Exosome complex component Rrp42 (266 aa).

This sequence belongs to the RNase PH family. Rrp42 subfamily. Component of the archaeal exosome complex. Forms a hexameric ring-like arrangement composed of 3 Rrp41-Rrp42 heterodimers. The hexameric ring associates with a trimer of Rrp4 and/or Csl4 subunits.

The protein localises to the cytoplasm. In terms of biological role, non-catalytic component of the exosome, which is a complex involved in RNA degradation. Contributes to the structuring of the Rrp41 active site. The polypeptide is Exosome complex component Rrp42 (Methanosarcina acetivorans (strain ATCC 35395 / DSM 2834 / JCM 12185 / C2A)).